The chain runs to 89 residues: MVKSAEVRRRKKSWVGKVVSDKMDKAIVIAIERRVQHPVYKKYFKKTTRLMAHDENNDAGIGDIVKVTECRPLSKRKSCRLVEVVEKAK.

Belongs to the universal ribosomal protein uS17 family. As to quaternary structure, part of the 30S ribosomal subunit.

In terms of biological role, one of the primary rRNA binding proteins, it binds specifically to the 5'-end of 16S ribosomal RNA. The protein is Small ribosomal subunit protein uS17 of Chlorobium phaeobacteroides (strain BS1).